Here is a 293-residue protein sequence, read N- to C-terminus: Formamidopyrimidine-DNA glycosylase (293 aa).

Pro2 (schiff-base intermediate with DNA) is an active-site residue. The active-site Proton donor is Glu3. The Proton donor; for beta-elimination activity role is filled by Lys58. His104, Arg123, and Lys166 together coordinate DNA. An FPG-type zinc finger spans residues 257–293 (AVYDREGERCRTPGCNGTVKRLVQNGRSTFWCSGCQT). Arg283 acts as the Proton donor; for delta-elimination activity in catalysis.

This sequence belongs to the FPG family. In terms of assembly, monomer. Requires Zn(2+) as cofactor.

The enzyme catalyses Hydrolysis of DNA containing ring-opened 7-methylguanine residues, releasing 2,6-diamino-4-hydroxy-5-(N-methyl)formamidopyrimidine.. It catalyses the reaction 2'-deoxyribonucleotide-(2'-deoxyribose 5'-phosphate)-2'-deoxyribonucleotide-DNA = a 3'-end 2'-deoxyribonucleotide-(2,3-dehydro-2,3-deoxyribose 5'-phosphate)-DNA + a 5'-end 5'-phospho-2'-deoxyribonucleoside-DNA + H(+). Functionally, involved in base excision repair of DNA damaged by oxidation or by mutagenic agents. Acts as a DNA glycosylase that recognizes and removes damaged bases. Has a preference for oxidized purines, such as 7,8-dihydro-8-oxoguanine (8-oxoG). Has AP (apurinic/apyrimidinic) lyase activity and introduces nicks in the DNA strand. Cleaves the DNA backbone by beta-delta elimination to generate a single-strand break at the site of the removed base with both 3'- and 5'-phosphates. This is Formamidopyrimidine-DNA glycosylase from Rhodopseudomonas palustris (strain HaA2).